The sequence spans 551 residues: Seventh homolog of septin 1 (551 aa).

N-acetylserine is present on Ser-2. A Septin-type G domain is found at 20 to 339; that stretch reads RGITYTMLLC…ENYRSEKLSS (320 aa). Residues 30-37 are G1 motif; sequence GPAGTGKT. GTP contacts are provided by residues 30–37, Gly-138, 218–226, and Arg-288; these read GPAGTGKT and RADSFTKEE. The tract at residues 135-138 is G3 motif; it reads MTHG. Residues 217-220 are G4 motif; it reads TRAD. Positions 381-417 are disordered; sequence NLRADTPRNQVSGNFKENEYEDNGEHDSAENEQEMSP. Tyr-400 bears the Phosphotyrosine mark. 2 positions are modified to phosphoserine: Ser-408 and Ser-416. Residues 418–518 are a coiled coil; sequence VRQLGREIKQ…KLINQNKLNG (101 aa). Residues Lys-426 and Lys-437 each participate in a glycyl lysine isopeptide (Lys-Gly) (interchain with G-Cter in SUMO) cross-link. 6 positions are modified to phosphoserine: Ser-447, Ser-460, Ser-519, Ser-520, Ser-522, and Ser-525. A disordered region spans residues 515–551; it reads KLNGSSSSINSLQQSTRSQIKKNDTYTDLASIASGRD. Over residues 519-532 the composition is skewed to low complexity; that stretch reads SSSSINSLQQSTRS. The residue at position 539 (Thr-539) is a Phosphothreonine. 2 positions are modified to phosphoserine: Ser-545 and Ser-548.

It belongs to the TRAFAC class TrmE-Era-EngA-EngB-Septin-like GTPase superfamily. Septin GTPase family. Component of the septin complex which consists of CDC3, CDC10, CDC11, CDC12 and probably SHS1 and rearranges to a cortical collar of highly ordered filaments at the mother-bud-neck. A complex formed by CDC3, CDC10, CDC11 and CDC12 is capable of forming long filaments in vitro and the components seem to be present in a 2:2:2:2 arrangement in vivo. The filaments are proposed to be formed by the end-to-end polymerization of CDC3-CDC12-CDC11 complexes with CDC10 serving as a bridge to bundle the polymers into paired filaments. Component of the GIN4 complex composed of at least BNI5, CDC3, CDC10, CDC11, CDC12, GIN4, NAP1 and SHS1. Self-associates. Interacts with CDC11 and SPA2. Phosphorylated by GIN4 and CLA4. Phosphorylation state is essential for septin ring dynamics during telophase. In terms of processing, sumoylated during mitosis on the mother cell side of the bud neck. Sumoylation probably plays a central role in regulating septin ring disassembly during the cell cycle.

It localises to the membrane. Its subcellular location is the bud neck. In terms of biological role, septins are GTPases involved in cytokinesis that assemble early in the cell cycle as a patch at the incipient bud site and form a ring approximately 15 minutes before bud emergence, which transforms into an hour-glass shaped collar of cortical filaments that spans both sides of the mother-bud neck. This collar persists until just before cytokinesis, when it splits into two rings that occupy opposite sides of the neck. The septins at the bud neck serve as a structural scaffold that recruits different components involved in diverse processes at specific stages during the cell cycle. Many proteins bind asymmetrically to the septin collar. The septin assembly is regulated by protein kinases GIN4 and/or CLA4. May act by recruiting MYO1 and HOF1, a protein involved in septation, to the site of cleavage. Septins are also involved in cell morphogenesis, bud site selection, chitin deposition, cell cycle regulation, cell compartmentalization and spore wall formation. CDCd11 with SHS1 11 are involved in the recruitment of BNI5 and thereby ensure efficient localization at the bud neck of MYO1, the type II myosin of the actomyosin contractile ring. The sequence is that of Seventh homolog of septin 1 from Saccharomyces cerevisiae (strain ATCC 204508 / S288c) (Baker's yeast).